A 470-amino-acid polypeptide reads, in one-letter code: MSKKYDAGVKEYRDTYWTPDYVPLDTDLLACFKCTGQEGVPREEVAAAVAAESSTGTWSTVWSELLTDLEFYKGRCYRIEDVPGDKESFYAFIAYPLDLFEEGSITNVLTSLVGNVFGFKALRHLRLEDIRFPMAFIKTCGGPPNGIVVERDRLNKYGRPLLGCTIKPKLGLSGKNYGRVVYECLRGGLDLTKDDENINSQPFQRWRERFEFVAEAVKLAQQETGEVKGHYLNCTATTPEEMYERAEFAKELDMPIIMHDYITGGFTANTGLANWCRKNGMLLHIHRAMHAVIDRHPKHGIHFRVLAKCLRLSGGDQLHTGTVVGKLEGDRQTTLGYIDNLRESFVPEDRSRGNFFDQDWGSMPGVFAVASGGIHVWHMPALLAIFGDDSCLQFGGGTHGHPWGSAAGAAANRVALEACVKARNAGREIEKESRDILMEAAKHSPELAIALETWKEIKFEFDTVDKLDVQ.

Substrate is bound by residues Asn-115 and Thr-165. Lys-167 acts as the Proton acceptor in catalysis. Residue Lys-169 coordinates substrate. Mg(2+) is bound by residues Lys-193, Asp-195, and Glu-196. N6-carboxylysine is present on Lys-193. Residue His-286 is the Proton acceptor of the active site. Positions 287, 319, and 371 each coordinate substrate.

This sequence belongs to the RuBisCO large chain family. Type I subfamily. In terms of assembly, heterohexadecamer of 8 large chains and 8 small chains. Forms a CsoS2-CsoS1-RuBisCO complex. Requires Mg(2+) as cofactor.

It is found in the carboxysome. It catalyses the reaction 2 (2R)-3-phosphoglycerate + 2 H(+) = D-ribulose 1,5-bisphosphate + CO2 + H2O. The enzyme catalyses D-ribulose 1,5-bisphosphate + O2 = 2-phosphoglycolate + (2R)-3-phosphoglycerate + 2 H(+). RuBisCO catalyzes two reactions: the carboxylation of D-ribulose 1,5-bisphosphate, the primary event in carbon dioxide fixation, as well as the oxidative fragmentation of the pentose substrate in the photorespiration process. Both reactions occur simultaneously and in competition at the same active site. The chain is Ribulose bisphosphate carboxylase large chain from Prochlorococcus marinus (strain MIT 9313).